A 383-amino-acid polypeptide reads, in one-letter code: Succinyl-diaminopimelate desuccinylase (383 aa).

Position 73 (His-73) interacts with Zn(2+). The active site involves Asp-75. Asp-107 contributes to the Zn(2+) binding site. Residue Glu-141 is the Proton acceptor of the active site. Positions 142, 170, and 356 each coordinate Zn(2+).

This sequence belongs to the peptidase M20A family. DapE subfamily. As to quaternary structure, homodimer. Zn(2+) serves as cofactor. Requires Co(2+) as cofactor.

The catalysed reaction is N-succinyl-(2S,6S)-2,6-diaminopimelate + H2O = (2S,6S)-2,6-diaminopimelate + succinate. It functions in the pathway amino-acid biosynthesis; L-lysine biosynthesis via DAP pathway; LL-2,6-diaminopimelate from (S)-tetrahydrodipicolinate (succinylase route): step 3/3. Its function is as follows. Catalyzes the hydrolysis of N-succinyl-L,L-diaminopimelic acid (SDAP), forming succinate and LL-2,6-diaminopimelate (DAP), an intermediate involved in the bacterial biosynthesis of lysine and meso-diaminopimelic acid, an essential component of bacterial cell walls. The protein is Succinyl-diaminopimelate desuccinylase of Pseudomonas fluorescens (strain ATCC BAA-477 / NRRL B-23932 / Pf-5).